A 563-amino-acid chain; its full sequence is NAD-dependent malic enzyme (563 aa).

The active-site Proton donor is tyrosine 101. Position 154 (arginine 154) interacts with NAD(+). Residue lysine 172 is the Proton acceptor of the active site. Positions 243, 244, and 267 each coordinate a divalent metal cation. The NAD(+) site is built by aspartate 267 and asparagine 416.

It belongs to the malic enzymes family. In terms of assembly, homotetramer. Mg(2+) serves as cofactor. Mn(2+) is required as a cofactor.

The enzyme catalyses (S)-malate + NAD(+) = pyruvate + CO2 + NADH. It catalyses the reaction oxaloacetate + H(+) = pyruvate + CO2. The polypeptide is NAD-dependent malic enzyme (Pseudomonas syringae pv. tomato (strain ATCC BAA-871 / DC3000)).